A 344-amino-acid polypeptide reads, in one-letter code: NADH-ubiquinone oxidoreductase chain 1 (344 aa).

The next 10 membrane-spanning stretches (helical) occupy residues 18-38 (FIII…IIAI), 58-78 (PNIV…KLLL), 89-109 (IFIF…AWAI), 123-143 (IGIL…IISG), 159-179 (AAQI…VLLC), 195-215 (IWYI…SLAE), 228-248 (AELV…LFFL), 253-273 (NIIL…LPPF), 281-301 (IPNS…FIWV), and 316-336 (LGWK…SGIL).

It belongs to the complex I subunit 1 family.

It is found in the mitochondrion inner membrane. It catalyses the reaction a ubiquinone + NADH + 5 H(+)(in) = a ubiquinol + NAD(+) + 4 H(+)(out). Its function is as follows. Core subunit of the mitochondrial membrane respiratory chain NADH dehydrogenase (Complex I) that is believed to belong to the minimal assembly required for catalysis. Complex I functions in the transfer of electrons from NADH to the respiratory chain. The immediate electron acceptor for the enzyme is believed to be ubiquinone. The protein is NADH-ubiquinone oxidoreductase chain 1 (ND1) of Cyanidium caldarium (Red alga).